A 570-amino-acid polypeptide reads, in one-letter code: Hydroxylamine reductase (570 aa).

4 residues coordinate [4Fe-4S] cluster: Cys5, Cys8, Cys17, and Cys23. 8 residues coordinate hybrid [4Fe-2O-2S] cluster: His266, Glu290, Cys334, Cys425, Cys453, Cys478, Glu513, and Lys515. A Cysteine persulfide modification is found at Cys425.

The protein belongs to the HCP family. The cofactor is [4Fe-4S] cluster. Hybrid [4Fe-2O-2S] cluster serves as cofactor.

It localises to the cytoplasm. The enzyme catalyses A + NH4(+) + H2O = hydroxylamine + AH2 + H(+). Functionally, catalyzes the reduction of hydroxylamine to form NH(3) and H(2)O. The chain is Hydroxylamine reductase from Clostridium botulinum (strain ATCC 19397 / Type A).